A 719-amino-acid polypeptide reads, in one-letter code: 2'-5'-oligoadenylate synthase 2 (719 aa).

Gly2 is lipidated: N-myristoyl glycine. OAS domain stretches follow at residues 11–335 (VPAQ…SWNV) and 343–683 (TPGH…WKVP). The residue at position 378 (Lys378) is an N6-acetyllysine. Ser396 is a binding site for ATP. The Mg(2+) site is built by Asp408, Asp410, and Asp481. Arg544 and Lys547 together coordinate ATP.

Belongs to the 2-5A synthase family. Homodimer. Mg(2+) is required as a cofactor. Post-translationally, myristoylation is not essential for its activity. Glycosylated. Glycosylation is essential for its activity.

The protein resides in the cytoplasm. The protein localises to the perinuclear region. The catalysed reaction is 3 ATP = 5'-triphosphoadenylyl-(2'-&gt;5')-adenylyl-(2'-&gt;5')-adenosine + 2 diphosphate. Its activity is regulated as follows. Produced as a latent enzyme which is activated by double stranded RNA (dsRNA) generated during the course of viral infection. The dsRNA activator must be at least 15 nucleotides long, and no modification of the 2'-hydroxyl group is tolerated. ssRNA or dsDNA do not act as activators. Strongly inhibited by copper, iron and zinc ions. Partially inhibited by cobalt and nickel ions. Its function is as follows. Interferon-induced, dsRNA-activated antiviral enzyme which plays a critical role in cellular innate antiviral response. Activated by detection of double stranded RNA (dsRNA): polymerizes higher oligomers of 2'-5'-oligoadenylates (2-5A) from ATP which then bind to the inactive monomeric form of ribonuclease L (RNASEL) leading to its dimerization and subsequent activation. Activation of RNASEL leads to degradation of cellular as well as viral RNA, resulting in the inhibition of protein synthesis, thus terminating viral replication. Can mediate the antiviral effect via the classical RNASEL-dependent pathway or an alternative antiviral pathway independent of RNASEL. In addition, it may also play a role in other cellular processes such as apoptosis, cell growth, differentiation and gene regulation. May act as a negative regulator of lactation, stopping lactation in virally infected mammary gland lobules, thereby preventing transmission of viruses to neonates. Non-infected lobules would not be affected, allowing efficient pup feeding during infection. This is 2'-5'-oligoadenylate synthase 2 from Homo sapiens (Human).